A 433-amino-acid chain; its full sequence is MTTDSDTALLFDPALALPSGPAPRRTSVGVRVGSGPGSVQVGGGAPIVVQSMTNTDTADIDSTVEQVAALARAGSELVRITVDRDPAAAAVPYIREKLDKMGCLVPLVGDFHYIGHRLLTEYPACAEALAKYRINPGNVGFREKRDRQFSTIVEIAAKYDKAVRIGANWGSLDQELLTSLMDKNAGSAAPLSVGAVTREAMVQSALLSAARAEELGLKRDRIILSAKVSSVQDLITVYRMVAARSDYALHLGLTEAGMGSKGIVASSAALGILLQEGIGDTIRVSLTPQPGGDRTLEVTVAQEILQTMGFRTFVPLVAACPGCGRTTSTVFQELARDIQTYIREEMPLWRSRYPGVESLNVAVMGCIVNGPGESKHADIGISLPGTGETPSAPVFIDGEKTTTLRGEGIAAEFKTIVQDYIERRFGGAKSAAE.

[4Fe-4S] cluster-binding residues include Cys320, Cys323, Cys366, and Glu373.

Belongs to the IspG family. [4Fe-4S] cluster serves as cofactor.

It catalyses the reaction (2E)-4-hydroxy-3-methylbut-2-enyl diphosphate + oxidized [flavodoxin] + H2O + 2 H(+) = 2-C-methyl-D-erythritol 2,4-cyclic diphosphate + reduced [flavodoxin]. It participates in isoprenoid biosynthesis; isopentenyl diphosphate biosynthesis via DXP pathway; isopentenyl diphosphate from 1-deoxy-D-xylulose 5-phosphate: step 5/6. Its function is as follows. Converts 2C-methyl-D-erythritol 2,4-cyclodiphosphate (ME-2,4cPP) into 1-hydroxy-2-methyl-2-(E)-butenyl 4-diphosphate. In Beijerinckia indica subsp. indica (strain ATCC 9039 / DSM 1715 / NCIMB 8712), this protein is 4-hydroxy-3-methylbut-2-en-1-yl diphosphate synthase (flavodoxin).